Consider the following 284-residue polypeptide: 2-dehydro-3-deoxyphosphooctonate aldolase (284 aa).

The protein belongs to the KdsA family.

The protein localises to the cytoplasm. It carries out the reaction D-arabinose 5-phosphate + phosphoenolpyruvate + H2O = 3-deoxy-alpha-D-manno-2-octulosonate-8-phosphate + phosphate. It participates in carbohydrate biosynthesis; 3-deoxy-D-manno-octulosonate biosynthesis; 3-deoxy-D-manno-octulosonate from D-ribulose 5-phosphate: step 2/3. The protein operates within bacterial outer membrane biogenesis; lipopolysaccharide biosynthesis. This is 2-dehydro-3-deoxyphosphooctonate aldolase from Edwardsiella ictaluri (strain 93-146).